A 314-amino-acid polypeptide reads, in one-letter code: tRNA pseudouridine synthase B (314 aa).

Asp-47 functions as the Nucleophile in the catalytic mechanism.

It belongs to the pseudouridine synthase TruB family. Type 1 subfamily.

The catalysed reaction is uridine(55) in tRNA = pseudouridine(55) in tRNA. Its function is as follows. Responsible for synthesis of pseudouridine from uracil-55 in the psi GC loop of transfer RNAs. The chain is tRNA pseudouridine synthase B from Vibrio campbellii (strain ATCC BAA-1116).